Consider the following 505-residue polypeptide: Facilitated trehalose transporter Tret1 (505 aa).

Topologically, residues 1-46 (MEMEIKDENLRNSVPFVRQLSTDSVKTKTEYDNEDGTPYKSTTQKL) are cytoplasmic. A helical transmembrane segment spans residues 47 to 67 (FLWTQLLAAFAVSVGSMNVGF). At 68 to 91 (SSGYTSPAVLTMNITLDITKEEIT) the chain is on the extracellular side. Asn-80 is a glycosylation site (N-linked (GlcNAc...) asparagine). Residues 92–112 (WVGGLMPLAALVGGIVGGPLI) form a helical membrane-spanning segment. Residues 113–124 (EYLGRKKTIMGT) lie on the Cytoplasmic side of the membrane. Residues 125 to 145 (AVPFTIGWMLIANAINVVMVF) form a helical membrane-spanning segment. At 146-149 (AGRV) the chain is on the extracellular side. The chain crosses the membrane as a helical span at residues 150–170 (ICGVCVGIVSLAFPVYIGETI). The Cytoplasmic portion of the chain corresponds to 171-175 (QPEVR). The chain crosses the membrane as a helical span at residues 176–196 (GALGLLPTAFGNTGILLAFLV). Topologically, residues 197–201 (GSYLD) are extracellular. The helical transmembrane segment at 202–222 (WSNLAFFGAAIPVPFFLLMIL) threads the bilayer. Residues 223–286 (TPETPRWYVS…QLFSKRYLPA (64 aa)) lie on the Cytoplasmic side of the membrane. Residues 287-307 (VMISLGLMLFQQLTGINAVIF) form a helical membrane-spanning segment. Topologically, residues 308–323 (YAASIFQMSGSSVDEN) are extracellular. Residues 324–344 (LASIIIGVVNFISTFIATMLI) traverse the membrane as a helical segment. At 345-350 (DRLGRK) the chain is on the cytoplasmic side. Residues 351-371 (VLLYISSVAMITTLLALGAYF) form a helical membrane-spanning segment. Residues 372-390 (YLKQNHIDVTAYGWLPLAC) are Extracellular-facing. A helical transmembrane segment spans residues 391–411 (LVIYVLGFSIGFGPIPWLMLG). At 412 to 419 (EILPSKIR) the chain is on the cytoplasmic side. A helical transmembrane segment spans residues 420–437 (GTAASLATGFNWTCTFIV). The Extracellular portion of the chain corresponds to 438–451 (TKTFQNIIDAIYMH). Residues 452-472 (GTLWLFAVICIGGLLFVIFFV) traverse the membrane as a helical segment. At 473 to 505 (PETKGKSLEEIEMKLTSGSRRVRNISKQPENIC) the chain is on the cytoplasmic side.

This sequence belongs to the major facilitator superfamily. Sugar transporter (TC 2.A.1.1) family. Trehalose transporter subfamily. In terms of tissue distribution, expressed in many larval tissues at a low level, moderate levels of expression are seen in testis and head and highest expression in muscle.

It localises to the cell membrane. Its function is as follows. High-capacity facilitative transporter for trehalose. Does not transport maltose, sucrose or lactose. Mediates the bidirectional transfer of trehalose. Responsible for the transport of trehalose synthesized in the fat body and the incorporation of trehalose into other tissues that require a carbon source, thereby regulating trehalose levels in the hemolymph. This is Facilitated trehalose transporter Tret1 from Bombyx mori (Silk moth).